The following is a 495-amino-acid chain: Probable aspartic-type endopeptidase OPSB (495 aa).

Residues 1 to 19 (MRGDSFIWSLATAIPLLST) form the signal peptide. In terms of domain architecture, Peptidase A1 spans 73-408 (YFCNLTLGTP…DLDNNEISIA (336 aa)). N-linked (GlcNAc...) asparagine glycosylation occurs at Asn-76. Asp-91 is an active-site residue. N-linked (GlcNAc...) asparagine glycosylation is present at Asn-136. Asp-290 is an active-site residue. Asn-413 carries an N-linked (GlcNAc...) asparagine glycan. The disordered stretch occupies residues 448 to 470 (TGLPGVETGVPGSRPPSSKAAGQ). Ala-467 is lipidated: GPI-anchor amidated alanine. A propeptide spans 468–495 (AGQAKRPDFVLGVAAVGLAGAGMLFAAM) (removed in mature form).

The protein belongs to the peptidase A1 family.

It is found in the cell membrane. Its function is as follows. Probable GPI-anchored aspartic-type endopeptidase which contributes to virulence. This is Probable aspartic-type endopeptidase OPSB (OPSB) from Trichophyton verrucosum (strain HKI 0517).